A 171-amino-acid polypeptide reads, in one-letter code: Group 1 truncated hemoglobin LI410 (171 aa).

A chloroplast-targeting transit peptide spans 1–23 (MMRTVQLRTLRPCIRAQQQPVRA). Heme is bound by residues tyrosine 63 and histidine 111.

This sequence belongs to the truncated hemoglobin family. Group I subfamily. Requires heme as cofactor.

Its subcellular location is the plastid. It localises to the chloroplast. The polypeptide is Group 1 truncated hemoglobin LI410 (LI410) (Chlamydomonas moewusii (Chlamydomonas eugametos)).